Consider the following 137-residue polypeptide: Large ribosomal subunit protein uL16 (137 aa).

Basic residues predominate over residues 1-13 (MLQPKRRKYRKEQ). A disordered region spans residues 1 to 22 (MLQPKRRKYRKEQKGRNTGVAT).

This sequence belongs to the universal ribosomal protein uL16 family. Part of the 50S ribosomal subunit.

Functionally, binds 23S rRNA and is also seen to make contacts with the A and possibly P site tRNAs. In Polynucleobacter asymbioticus (strain DSM 18221 / CIP 109841 / QLW-P1DMWA-1) (Polynucleobacter necessarius subsp. asymbioticus), this protein is Large ribosomal subunit protein uL16.